The sequence spans 1103 residues: Activity-dependent neuroprotector homeobox protein (1103 aa).

Glycyl lysine isopeptide (Lys-Gly) (interchain with G-Cter in SUMO2) cross-links involve residues lysine 39 and lysine 72. The C2H2-type 1; degenerate zinc-finger motif lies at 74–97 (FCCSACPFSSKFFSAYKSHFRNVH). Serine 98 bears the Phosphoserine mark. A C2H2-type 2; degenerate zinc finger spans residues 107-129 (LNCPYCTFNADKKTLETHIKIFH). A disordered region spans residues 133–154 (SSAPSSSLSTFKDKNKNDGLKP). Residues 143 to 154 (FKDKNKNDGLKP) are compositionally biased toward basic and acidic residues. Residues lysine 144 and lysine 155 each participate in a glycyl lysine isopeptide (Lys-Gly) (interchain with G-Cter in SUMO2) cross-link. The C2H2-type 3; degenerate zinc-finger motif lies at 165–188 (YYCKKCTYRDPLYEIVRKHIYREH). Glycyl lysine isopeptide (Lys-Gly) (interchain with G-Cter in SUMO2) cross-links involve residues lysine 203, lysine 231, lysine 266, lysine 274, lysine 278, lysine 279, lysine 311, and lysine 335. Residues 221-244 (IHCKRCLFMPKSYEALVQHVIEDH) form a C2H2-type 4; degenerate zinc finger. Arginine 348 is modified (asymmetric dimethylarginine). The tract at residues 354–361 (NAPVSIPQ) is neuroprotective peptide (NAP). Residues 360–439 (PQQSQSVKQL…PAATGPPPSN (80 aa)) form a disordered region. Residues lysine 367 and lysine 408 each participate in a glycyl lysine isopeptide (Lys-Gly) (interchain with G-Cter in SUMO2) cross-link. Positions 393 to 423 (SLQTANTSSLPPGQVKSPSVSQSQASRVLGQ) are enriched in polar residues. A phosphoserine mark is found at serine 409 and serine 413. Lysine 427 is covalently cross-linked (Glycyl lysine isopeptide (Lys-Gly) (interchain with G-Cter in SUMO2)). The segment covering 427-438 (KPPPAATGPPPS) has biased composition (pro residues). The C2H2-type 5; atypical zinc-finger motif lies at 447–469 (KICTICNELFPENVYSVHFEKEH). C2H2-type zinc fingers lie at residues 489-510 (SKCL…MLIH) and 512-535 (LSCP…RMVH). Glycyl lysine isopeptide (Lys-Gly) (interchain with G-Cter in SUMO2) cross-links involve residues lysine 600 and lysine 606. Serine 608 bears the Phosphoserine mark. Residues lysine 616, lysine 621, lysine 632, and lysine 658 each participate in a glycyl lysine isopeptide (Lys-Gly) (interchain with G-Cter in SUMO2) cross-link. Residues 622–647 (TLCPLCFSILKGPISDALAHHLRERH) form a C2H2-type 8; atypical zinc finger. A C2H2-type 9; atypical zinc finger spans residues 662–686 (YKCIHCLGVYTSNMTASTITLHLVH). The segment at 691–712 (GKTQNGQDKTNAPSRLNQSPGL) is disordered. Positions 692–710 (KTQNGQDKTNAPSRLNQSP) are enriched in polar residues. Lysine 699 is covalently cross-linked (Glycyl lysine isopeptide (Lys-Gly) (interchain with G-Cter in SUMO2)). Residue serine 709 is modified to Phosphoserine. Glycyl lysine isopeptide (Lys-Gly) (interchain with G-Cter in SUMO2) cross-links involve residues lysine 716, lysine 728, and lysine 731. Serine 738 carries the post-translational modification Phosphoserine. Lysine 745 is covalently cross-linked (Glycyl lysine isopeptide (Lys-Gly) (interchain with G-Cter in SUMO2)). Positions 754–814 (LDPKGHEDDS…SNKRKKCVRD (61 aa)) form a DNA-binding region, homeobox. A Phosphoserine modification is found at serine 805. Residues lysine 807, lysine 829, and lysine 835 each participate in a glycyl lysine isopeptide (Lys-Gly) (interchain with G-Cter in SUMO2) cross-link. Residues 873-1029 (DSFSDSFEHL…VQDDTEQLKW (157 aa)) are disordered. 5 positions are modified to phosphoserine: serine 876, serine 878, serine 886, serine 889, and serine 905. Residues lysine 914, lysine 929, and lysine 936 each participate in a glycyl lysine isopeptide (Lys-Gly) (interchain with G-Cter in SUMO2) cross-link. Basic and acidic residues predominate over residues 922–954 (ESEKLDQKEEEDGSKYETIHLTEERAKLMHDAS). 2 positions are modified to phosphoserine: serine 954 and serine 956. The span at 972–982 (PSESGPGSRQV) shows a compositional bias: polar residues. Lysine 1017 is covalently cross-linked (Glycyl lysine isopeptide (Lys-Gly) (interchain with G-Cter in SUMO2)). Lysine 1036 and lysine 1043 each carry N6-acetyllysine; alternate. Residues lysine 1036 and lysine 1043 each participate in a glycyl lysine isopeptide (Lys-Gly) (interchain with G-Cter in SUMO2); alternate cross-link. Residues 1045-1103 (QSQWENASENAERLPNPQIEWQNSTIDSEDGEQFDSMTDGVADPMHGSLTGVKLSSQQA) form a disordered region. At serine 1072 the chain carries Phosphoserine.

Interacts (via N-terminal region) with beta-catenin/CTNNB1 (via the central armadillo domains); interaction is direct and stabilizes CTNNB1 by modulating its phosphorylation by glycogen synthase kinase-3 beta GSK3B.

The protein resides in the nucleus. Its subcellular location is the chromosome. May be involved in transcriptional regulation. May mediate some of the neuroprotective peptide VIP-associated effects involving normal growth and cancer proliferation. Positively modulates WNT-beta-catenin/CTNN1B signaling, acting by regulating phosphorylation of, and thereby stabilizing, CTNNB1. May be required for neural induction and neuronal differentiation. May be involved in erythroid differentiation. The sequence is that of Activity-dependent neuroprotector homeobox protein (Adnp) from Rattus norvegicus (Rat).